The sequence spans 451 residues: Phosphoglucosamine mutase (451 aa).

The Phosphoserine intermediate role is filled by S102. Residues S102, D243, D245, and D247 each contribute to the Mg(2+) site. Phosphoserine is present on S102.

Belongs to the phosphohexose mutase family. Mg(2+) serves as cofactor. In terms of processing, activated by phosphorylation.

It catalyses the reaction alpha-D-glucosamine 1-phosphate = D-glucosamine 6-phosphate. Its function is as follows. Catalyzes the conversion of glucosamine-6-phosphate to glucosamine-1-phosphate. In Sinorhizobium medicae (strain WSM419) (Ensifer medicae), this protein is Phosphoglucosamine mutase.